A 311-amino-acid chain; its full sequence is HPr kinase/phosphorylase (311 aa).

Catalysis depends on residues His-138 and Lys-159. An ATP-binding site is contributed by 153–160 (GDSGIGKS). A Mg(2+)-binding site is contributed by Ser-160. The active-site Proton acceptor; for phosphorylation activity. Proton donor; for dephosphorylation activity is the Asp-177. An important for the catalytic mechanism of both phosphorylation and dephosphorylation region spans residues 201 to 210 (IEIRGVGIID). Glu-202 provides a ligand contact to Mg(2+). Arg-243 is an active-site residue. Residues 264–269 (PVKTGR) form an important for the catalytic mechanism of dephosphorylation region.

It belongs to the HPrK/P family. As to quaternary structure, homohexamer. Mg(2+) is required as a cofactor.

It catalyses the reaction [HPr protein]-L-serine + ATP = [HPr protein]-O-phospho-L-serine + ADP + H(+). It carries out the reaction [HPr protein]-O-phospho-L-serine + phosphate + H(+) = [HPr protein]-L-serine + diphosphate. Catalyzes the ATP- as well as the pyrophosphate-dependent phosphorylation of a specific serine residue in HPr, a phosphocarrier protein of the phosphoenolpyruvate-dependent sugar phosphotransferase system (PTS). HprK/P also catalyzes the pyrophosphate-producing, inorganic phosphate-dependent dephosphorylation (phosphorolysis) of seryl-phosphorylated HPr (P-Ser-HPr). The two antagonistic activities of HprK/P are regulated by several intracellular metabolites, which change their concentration in response to the absence or presence of rapidly metabolisable carbon sources (glucose, fructose, etc.) in the growth medium. Therefore, by controlling the phosphorylation state of HPr, HPrK/P is a sensor enzyme that plays a major role in the regulation of carbon metabolism and sugar transport: it mediates carbon catabolite repression (CCR), and regulates PTS-catalyzed carbohydrate uptake and inducer exclusion. The polypeptide is HPr kinase/phosphorylase (Streptococcus pneumoniae (strain 70585)).